Consider the following 91-residue polypeptide: Small ribosomal subunit protein uS15 (91 aa).

It belongs to the universal ribosomal protein uS15 family. As to quaternary structure, part of the 30S ribosomal subunit. Forms a bridge to the 50S subunit in the 70S ribosome, contacting the 23S rRNA.

One of the primary rRNA binding proteins, it binds directly to 16S rRNA where it helps nucleate assembly of the platform of the 30S subunit by binding and bridging several RNA helices of the 16S rRNA. Its function is as follows. Forms an intersubunit bridge (bridge B4) with the 23S rRNA of the 50S subunit in the ribosome. This Rickettsia africae (strain ESF-5) protein is Small ribosomal subunit protein uS15.